A 469-amino-acid polypeptide reads, in one-letter code: Adenosylhomocysteinase (469 aa).

Threonine 63, aspartate 139, and glutamate 164 together coordinate substrate. Residue 165–167 (TTT) participates in NAD(+) binding. Lysine 194 and aspartate 198 together coordinate substrate. NAD(+) contacts are provided by residues asparagine 199, 228 to 233 (GYGDVG), glutamate 251, asparagine 300, 321 to 323 (IGH), and asparagine 375.

Belongs to the adenosylhomocysteinase family. NAD(+) serves as cofactor.

The protein resides in the cytoplasm. The enzyme catalyses S-adenosyl-L-homocysteine + H2O = L-homocysteine + adenosine. The protein operates within amino-acid biosynthesis; L-homocysteine biosynthesis; L-homocysteine from S-adenosyl-L-homocysteine: step 1/1. In terms of biological role, may play a key role in the regulation of the intracellular concentration of adenosylhomocysteine. The protein is Adenosylhomocysteinase of Pseudomonas fluorescens (strain ATCC BAA-477 / NRRL B-23932 / Pf-5).